The following is a 112-amino-acid chain: UPF0060 membrane protein Arth_4238 (112 aa).

The next 4 helical transmembrane spans lie at isoleucine 7–alanine 27, glutamate 33–leucine 53, isoleucine 62–aspartate 82, and arginine 88–proline 108.

The protein belongs to the UPF0060 family.

The protein localises to the cell membrane. This Arthrobacter sp. (strain FB24) protein is UPF0060 membrane protein Arth_4238.